A 147-amino-acid chain; its full sequence is Acireductone dioxygenase (147 aa).

Residues His74, His76, Glu80, and His119 each contribute to the Fe(2+) site. His74, His76, Glu80, and His119 together coordinate Ni(2+).

The protein belongs to the acireductone dioxygenase (ARD) family. It depends on Fe(2+) as a cofactor. Requires Ni(2+) as cofactor.

The protein localises to the cytoplasm. Its subcellular location is the nucleus. The catalysed reaction is 1,2-dihydroxy-5-(methylsulfanyl)pent-1-en-3-one + O2 = 4-methylsulfanyl-2-oxobutanoate + formate + 2 H(+). The enzyme catalyses 1,2-dihydroxy-5-(methylsulfanyl)pent-1-en-3-one + O2 = 3-(methylsulfanyl)propanoate + CO + formate + 2 H(+). It functions in the pathway amino-acid biosynthesis; L-methionine biosynthesis via salvage pathway; L-methionine from S-methyl-5-thio-alpha-D-ribose 1-phosphate: step 5/6. Functionally, catalyzes 2 different reactions between oxygen and the acireductone 1,2-dihydroxy-3-keto-5-methylthiopentene (DHK-MTPene) depending upon the metal bound in the active site. Fe-containing acireductone dioxygenase (Fe-ARD) produces formate and 2-keto-4-methylthiobutyrate (KMTB), the alpha-ketoacid precursor of methionine in the methionine recycle pathway. Ni-containing acireductone dioxygenase (Ni-ARD) produces methylthiopropionate, carbon monoxide and formate, and does not lie on the methionine recycle pathway. The polypeptide is Acireductone dioxygenase (adi1) (Dictyostelium discoideum (Social amoeba)).